We begin with the raw amino-acid sequence, 581 residues long: FAD-linked oxidoreductase easE (581 aa).

Positions 1 to 25 (MYRLLGPLACLALAWFFTWAPSGRC) are cleaved as a signal peptide. Asn44 and Asn73 each carry an N-linked (GlcNAc...) asparagine glycan. The FAD-binding PCMH-type domain occupies 122–306 (HQGRIPLYSA…AQATIRVFPD (185 aa)). A glycan (N-linked (GlcNAc...) asparagine) is linked at Asn369.

Belongs to the oxygen-dependent FAD-linked oxidoreductase family. FAD serves as cofactor.

It participates in alkaloid biosynthesis; ergot alkaloid biosynthesis. Its function is as follows. FAD-linked oxidoreductase; part of the gene cluster that mediates the biosynthesis of fungal ergot alkaloid. DmaW catalyzes the first step of ergot alkaloid biosynthesis by condensing dimethylallyl diphosphate (DMAP) and tryptophan to form 4-dimethylallyl-L-tryptophan. The second step is catalyzed by the methyltransferase easF that methylates 4-dimethylallyl-L-tryptophan in the presence of S-adenosyl-L-methionine, resulting in the formation of 4-dimethylallyl-L-abrine. The catalase easC and the FAD-dependent oxidoreductase easE then transform 4-dimethylallyl-L-abrine to chanoclavine-I which is further oxidized by easD in the presence of NAD(+), resulting in the formation of chanoclavine-I aldehyde. Agroclavine dehydrogenase easG then mediates the conversion of chanoclavine-I aldehyde to agroclavine via a non-enzymatic adduct reaction: the substrate is an iminium intermediate that is formed spontaneously from chanoclavine-I aldehyde in the presence of glutathione. Further conversion of agroclavine to paspalic acid is a two-step process involving oxidation of agroclavine to elymoclavine and of elymoclavine to paspalic acid, the second step being performed by the elymoclavine oxidase cloA. However, cloA does not encode a functional enzyme indicating that C.fusiformis terminates its ergot alkaloid pathway at elymoclavine. The polypeptide is FAD-linked oxidoreductase easE (Claviceps fusiformis (Ergot fungus)).